A 263-amino-acid polypeptide reads, in one-letter code: Heat-labile enterotoxin IIB, A chain (263 aa).

The N-terminal stretch at 1-20 is a signal peptide; the sequence is MAKVISFFISLFLISFPLYA. An NAD(+)-binding site is contributed by 26 to 39; sequence ADSRTPDEVRRSGG. The active site involves Glu130. A disulfide bridge links Cys205 with Cys217.

This sequence belongs to the enterotoxin A family. In terms of assembly, heterohexamer of one A chain and of five B chains.

Functionally, the biological activity of the toxin is produced by the A chain, which activates intracellular adenyl cyclase. The sequence is that of Heat-labile enterotoxin IIB, A chain from Escherichia coli.